The primary structure comprises 372 residues: DNA replication and repair protein RecF (372 aa).

30 to 37 (GANGQGKT) is an ATP binding site.

Belongs to the RecF family.

It is found in the cytoplasm. The RecF protein is involved in DNA metabolism; it is required for DNA replication and normal SOS inducibility. RecF binds preferentially to single-stranded, linear DNA. It also seems to bind ATP. The chain is DNA replication and repair protein RecF from Heliobacterium modesticaldum (strain ATCC 51547 / Ice1).